We begin with the raw amino-acid sequence, 35 residues long: Photosystem II reaction center protein T (35 aa).

The chain crosses the membrane as a helical span at residues 3 to 23 (ALVYTFLLVSTLGIIFFAIFF).

The protein belongs to the PsbT family. In terms of assembly, PSII is composed of 1 copy each of membrane proteins PsbA, PsbB, PsbC, PsbD, PsbE, PsbF, PsbH, PsbI, PsbJ, PsbK, PsbL, PsbM, PsbT, PsbY, PsbZ, Psb30/Ycf12, at least 3 peripheral proteins of the oxygen-evolving complex and a large number of cofactors. It forms dimeric complexes.

The protein resides in the plastid. It localises to the chloroplast thylakoid membrane. Found at the monomer-monomer interface of the photosystem II (PS II) dimer, plays a role in assembly and dimerization of PSII. PSII is a light-driven water plastoquinone oxidoreductase, using light energy to abstract electrons from H(2)O, generating a proton gradient subsequently used for ATP formation. The chain is Photosystem II reaction center protein T from Cabomba caroliniana (Carolina fanwort).